A 378-amino-acid chain; its full sequence is Succinate--CoA ligase [GDP-forming] subunit beta (378 aa).

The ATP-grasp domain maps to 9 to 235; it reads KEILARYGVP…VEAEHPLEVE (227 aa). GTP-binding positions include lysine 45, 52–54, valine 94, and glutamate 99; that span reads GRG. Asparagine 190 and aspartate 204 together coordinate Mg(2+). Substrate contacts are provided by residues asparagine 255 and 312-314; that span reads GIT.

Belongs to the succinate/malate CoA ligase beta subunit family. In terms of assembly, heterotetramer of two alpha and two beta subunits. It depends on Mg(2+) as a cofactor.

It catalyses the reaction GTP + succinate + CoA = succinyl-CoA + GDP + phosphate. The enzyme catalyses succinate + ATP + CoA = succinyl-CoA + ADP + phosphate. The protein operates within carbohydrate metabolism; tricarboxylic acid cycle; succinate from succinyl-CoA (ligase route): step 1/1. Functionally, succinyl-CoA synthetase functions in the citric acid cycle (TCA), coupling the hydrolysis of succinyl-CoA to the synthesis of either ATP or GTP and thus represents the only step of substrate-level phosphorylation in the TCA. The beta subunit provides nucleotide specificity of the enzyme and binds the substrate succinate, while the binding sites for coenzyme A and phosphate are found in the alpha subunit. Can use either ATP or GTP, but prefers GTP. This chain is Succinate--CoA ligase [GDP-forming] subunit beta, found in Thermus thermophilus.